The chain runs to 453 residues: Aldehyde dehydrogenase, dimeric NADP-preferring (453 aa).

Residue S2 is modified to N-acetylserine. K178 is modified (N6-acetyllysine). Residue G188–G193 participates in NAD(+) binding. An N6-acetyllysine modification is found at K194. Residues E210 and C244 contribute to the active site.

It belongs to the aldehyde dehydrogenase family. As to quaternary structure, homodimer. In terms of tissue distribution, high levels in stomach, esophagus and lung; low level in the liver and kidney.

It is found in the cytoplasm. The enzyme catalyses an aldehyde + NAD(+) + H2O = a carboxylate + NADH + 2 H(+). It catalyses the reaction octanal + NAD(+) + H2O = octanoate + NADH + 2 H(+). ALDHs play a major role in the detoxification of alcohol-derived acetaldehyde. They are involved in the metabolism of corticosteroids, biogenic amines, neurotransmitters, and lipid peroxidation. Oxidizes medium and long chain aldehydes into non-toxic fatty acids. Preferentially oxidizes aromatic aldehyde substrates. Comprises about 50 percent of corneal epithelial soluble proteins. May play a role in preventing corneal damage caused by ultraviolet light. In Homo sapiens (Human), this protein is Aldehyde dehydrogenase, dimeric NADP-preferring (ALDH3A1).